The chain runs to 334 residues: Geranylgeranyl pyrophosphate synthase idtG (334 aa).

3 residues coordinate isopentenyl diphosphate: Lys-49, Arg-52, and His-81. Asp-88 and Asp-92 together coordinate Mg(2+). Arg-97 is a binding site for dimethylallyl diphosphate. Arg-98 is a binding site for isopentenyl diphosphate. The dimethylallyl diphosphate site is built by Lys-175, Thr-176, and Gln-209. Asp-212 provides a ligand contact to Mg(2+). 3 residues coordinate dimethylallyl diphosphate: Asn-216, Lys-226, and Lys-236.

The protein belongs to the FPP/GGPP synthase family. The cofactor is Mg(2+).

It carries out the reaction isopentenyl diphosphate + dimethylallyl diphosphate = (2E)-geranyl diphosphate + diphosphate. It catalyses the reaction isopentenyl diphosphate + (2E)-geranyl diphosphate = (2E,6E)-farnesyl diphosphate + diphosphate. The enzyme catalyses isopentenyl diphosphate + (2E,6E)-farnesyl diphosphate = (2E,6E,10E)-geranylgeranyl diphosphate + diphosphate. It participates in secondary metabolite biosynthesis. In terms of biological role, geranylgeranyl pyrophosphate synthase; part of the gene cluster that mediates the biosynthesis of paspalitrems, indole-diterpene (IDT) mycotoxins that are potent tremorgens in mammals. The geranylgeranyl diphosphate (GGPP) synthase idtG is proposed to catalyze the first step in IDT biosynthesis via catalysis of a series of iterative condensations of isopentenyl diphosphate (IPP) with dimethylallyl diphosphate (DMAPP), geranyl diphosphate (GPP), and farnesyl diphosphate (FPP), to form GGPP. Condensation of indole-3-glycerol phosphate with GGPP by the prenyltransferase idtC then forms 3-geranylgeranylindole (3-GGI). Epoxidation of the two terminal alkenes of the geranylgeranyl moiety by the FAD-dependent monooxygenase idtM, and cyclization by the terpene cyclase idtB then leads to the production of paspaline. The cytochrome P450 monooxygenase idtP then catalyzes oxidative elimination of the pendant methyl group at C-12 of paspaline and generates the C-10 ketone to yield 13-desoxypaxilline. The cytochrome P450 monooxygenase idtQ may catalyze the C-13 oxidation of 13-desoxypaxilline to afford paxilline. Considering that both paspalicine and paxilline were detected in C.paspali, idtQ also catalyzes the formation of paspalinine from 13-desoxypaxilline via paspalicine as an intermediate. Finally, the alpha-prenyltransferase idtF prenylates paspalinine at the C-20 or the C-21 positions to yield paspalitrems A and C, respectively. The hydroxylation of paspalitrem A at C-32 by a still unknown oxidase affords paspalitrem B. In Claviceps paspali (Rye ergot fungus), this protein is Geranylgeranyl pyrophosphate synthase idtG.